The chain runs to 20 residues: Phospholipase A2 homolog P-elapitoxin-Aa1a gamma chain (20 aa).

It belongs to the phospholipase A2 family. Group I subfamily. As to quaternary structure, heterotrimer of alpha, beta and gamma chains, each related to PLA2. Post-translationally, glycosylated. Expressed by the venom gland.

The protein localises to the secreted. Heterotrimer: Snake venom phospholipase A2 (PLA2) that has presynaptic neurotoxicity. Inhibits nerve-evoked twitch contractions but not responses to cholinergic agonists acetylcholine and carbachol and to depolarizing agonist KCl. Causes a fade in tetanic contractions. Displays a triphasic mode of action with depression, enhancement and blockade of neurotransmission. Does not display myotoxic activity such as changes in baseline muscle tension or inhibition of directly stimulated muscle twitches. All subunits are necessary for maximum toxicity. In terms of biological role, monomer: the gamma chain has no significant enzymatic activity and is not toxic by itself. In Acanthophis antarcticus (Common death adder), this protein is Phospholipase A2 homolog P-elapitoxin-Aa1a gamma chain.